The sequence spans 336 residues: Phenylalanine--tRNA ligase alpha subunit (336 aa).

A Mg(2+)-binding site is contributed by Glu263.

It belongs to the class-II aminoacyl-tRNA synthetase family. Phe-tRNA synthetase alpha subunit type 1 subfamily. As to quaternary structure, tetramer of two alpha and two beta subunits. Requires Mg(2+) as cofactor.

It localises to the cytoplasm. The enzyme catalyses tRNA(Phe) + L-phenylalanine + ATP = L-phenylalanyl-tRNA(Phe) + AMP + diphosphate + H(+). This is Phenylalanine--tRNA ligase alpha subunit from Thermosynechococcus vestitus (strain NIES-2133 / IAM M-273 / BP-1).